We begin with the raw amino-acid sequence, 362 residues long: Bifunctional chorismate mutase/prephenate dehydratase (362 aa).

The Chorismate mutase domain occupies 1–92 (MEELKELRKE…ACLSLEKKIK (92 aa)). Residues Arg-8, Arg-25, Lys-36, and Glu-49 each coordinate substrate. The 175-residue stretch at 93–267 (VAYLGPKATF…NFTRFLVIAK (175 aa)) folds into the Prephenate dehydratase domain. One can recognise an ACT domain in the interval 279-356 (SILFGVKDEP…QFLKVLGSYP (78 aa)).

Its subcellular location is the cytoplasm. The catalysed reaction is chorismate = prephenate. It catalyses the reaction prephenate + H(+) = 3-phenylpyruvate + CO2 + H2O. The protein operates within amino-acid biosynthesis; L-phenylalanine biosynthesis; phenylpyruvate from prephenate: step 1/1. Its pathway is metabolic intermediate biosynthesis; prephenate biosynthesis; prephenate from chorismate: step 1/1. In terms of biological role, catalyzes the Claisen rearrangement of chorismate to prephenate and the decarboxylation/dehydration of prephenate to phenylpyruvate. The protein is Bifunctional chorismate mutase/prephenate dehydratase (pheA) of Aquifex aeolicus (strain VF5).